Reading from the N-terminus, the 102-residue chain is Large ribosomal subunit protein uL24 (102 aa).

The protein belongs to the universal ribosomal protein uL24 family. As to quaternary structure, part of the 50S ribosomal subunit.

Its function is as follows. One of two assembly initiator proteins, it binds directly to the 5'-end of the 23S rRNA, where it nucleates assembly of the 50S subunit. Functionally, one of the proteins that surrounds the polypeptide exit tunnel on the outside of the subunit. The protein is Large ribosomal subunit protein uL24 of Lysinibacillus sphaericus (strain C3-41).